The primary structure comprises 404 residues: Acetate kinase (404 aa).

Residue N7 coordinates Mg(2+). K14 contacts ATP. R91 is a binding site for substrate. Residue D148 is the Proton donor/acceptor of the active site. ATP is bound by residues 208–212 and 283–285; these read HLGNG and DLR. Residue E388 participates in Mg(2+) binding.

It belongs to the acetokinase family. In terms of assembly, homodimer. Mg(2+) is required as a cofactor. The cofactor is Mn(2+).

It localises to the cytoplasm. It carries out the reaction acetate + ATP = acetyl phosphate + ADP. It participates in metabolic intermediate biosynthesis; acetyl-CoA biosynthesis; acetyl-CoA from acetate: step 1/2. Functionally, catalyzes the formation of acetyl phosphate from acetate and ATP. Can also catalyze the reverse reaction. The protein is Acetate kinase of Borrelia turicatae (strain 91E135).